The following is a 110-amino-acid chain: Large ribosomal subunit protein uL22 (110 aa).

Belongs to the universal ribosomal protein uL22 family. In terms of assembly, part of the 50S ribosomal subunit.

In terms of biological role, this protein binds specifically to 23S rRNA; its binding is stimulated by other ribosomal proteins, e.g. L4, L17, and L20. It is important during the early stages of 50S assembly. It makes multiple contacts with different domains of the 23S rRNA in the assembled 50S subunit and ribosome. Functionally, the globular domain of the protein is located near the polypeptide exit tunnel on the outside of the subunit, while an extended beta-hairpin is found that lines the wall of the exit tunnel in the center of the 70S ribosome. This chain is Large ribosomal subunit protein uL22, found in Dichelobacter nodosus (strain VCS1703A).